The following is a 119-amino-acid chain: MARFVVVPLLVLVSLFGLEAIQHPPKIQVYSRYPADNGKPNFLNCYVSGFHPSDIEVDLLKNGKKIEKVEHSDLSFSKDWSFYLLYYTEFTPNEKDEYACRVSHVTFSTPKTVKWDRNM.

The signal sequence occupies residues 1–20 (MARFVVVPLLVLVSLFGLEA). The Ig-like C1-type domain maps to 25 to 114 (PKIQVYSRYP…VTFSTPKTVK (90 aa)). Residues cysteine 45 and cysteine 100 are joined by a disulfide bond.

The protein belongs to the beta-2-microglobulin family. As to quaternary structure, heterodimer of an alpha chain and a beta chain. Beta-2-microglobulin is the beta-chain of major histocompatibility complex class I molecules.

Its subcellular location is the secreted. Functionally, component of the class I major histocompatibility complex (MHC). Involved in the presentation of peptide antigens to the immune system. This is Beta-2-microglobulin (B2M) from Saguinus oedipus (Cotton-top tamarin).